The following is a 62-amino-acid chain: Large ribosomal subunit protein bL28 (62 aa).

This sequence belongs to the bacterial ribosomal protein bL28 family.

This Streptococcus uberis (strain ATCC BAA-854 / 0140J) protein is Large ribosomal subunit protein bL28.